The following is a 367-amino-acid chain: tRNA-specific 2-thiouridylase MnmA (367 aa).

ATP-binding positions include 9-16 and M35; that span reads GLSGGVDS. Residues 95–97 form an interaction with target base in tRNA region; it reads NPD. Residue C100 is the Nucleophile of the active site. C100 and C196 are joined by a disulfide. G124 contributes to the ATP binding site. Residues 146 to 148 form an interaction with tRNA region; that stretch reads KDQ. Residue C196 is the Cysteine persulfide intermediate of the active site. Residues 308-309 form an interaction with tRNA region; that stretch reads RY.

This sequence belongs to the MnmA/TRMU family.

It is found in the cytoplasm. It catalyses the reaction S-sulfanyl-L-cysteinyl-[protein] + uridine(34) in tRNA + AH2 + ATP = 2-thiouridine(34) in tRNA + L-cysteinyl-[protein] + A + AMP + diphosphate + H(+). Its function is as follows. Catalyzes the 2-thiolation of uridine at the wobble position (U34) of tRNA, leading to the formation of s(2)U34. This Nitrosococcus oceani (strain ATCC 19707 / BCRC 17464 / JCM 30415 / NCIMB 11848 / C-107) protein is tRNA-specific 2-thiouridylase MnmA.